The primary structure comprises 310 residues: tRNA-cytidine(32) 2-sulfurtransferase (310 aa).

The PP-loop motif signature appears at 45–50 (SGGKDS). The [4Fe-4S] cluster site is built by Cys120, Cys123, and Cys211.

The protein belongs to the TtcA family. In terms of assembly, homodimer. Mg(2+) is required as a cofactor. The cofactor is [4Fe-4S] cluster.

Its subcellular location is the cytoplasm. It carries out the reaction cytidine(32) in tRNA + S-sulfanyl-L-cysteinyl-[cysteine desulfurase] + AH2 + ATP = 2-thiocytidine(32) in tRNA + L-cysteinyl-[cysteine desulfurase] + A + AMP + diphosphate + H(+). It functions in the pathway tRNA modification. In terms of biological role, catalyzes the ATP-dependent 2-thiolation of cytidine in position 32 of tRNA, to form 2-thiocytidine (s(2)C32). The sulfur atoms are provided by the cysteine/cysteine desulfurase (IscS) system. In Shewanella putrefaciens (strain CN-32 / ATCC BAA-453), this protein is tRNA-cytidine(32) 2-sulfurtransferase.